Here is a 432-residue protein sequence, read N- to C-terminus: Transcriptional adapter 3 (432 aa).

Lysine 21 is covalently cross-linked (Glycyl lysine isopeptide (Lys-Gly) (interchain with G-Cter in SUMO2)). Positions isoleucine 40–glutamine 69 form a coiled coil. Residues alanine 87–glutamine 127 form a disordered region. Residue lysine 129 forms a Glycyl lysine isopeptide (Lys-Gly) (interchain with G-Cter in SUMO2) linkage. Residues asparagine 272 to lysine 319 are disordered. Phosphoserine occurs at positions 280 and 298. A compositionally biased stretch (polar residues) spans alanine 295–proline 305. The stretch at leucine 367–threonine 407 forms a coiled coil. At lysine 418 the chain carries N6-acetyllysine.

This sequence belongs to the NGG1 family. In terms of assembly, the PCAF complex is composed of a number of TBP-associated factors (TAFS), such as TAF5, TAF5L, TAF6, TAF6L, TAF9, TAF10 and TAF12, PCAF, and also PCAF-associated factors (PAFs), such as TADA2L/ADA2, TADA3L/ADA3 and SPT3. Interacts directly with TADA2L and PCAF and also with the high-risk HPV oncoprotein E6. Component of the STAGA transcription coactivator-HAT complex, at least composed of SUPT3H, GCN5L2, TAF5L, TAF6L, SUPT7L, TADA3L, TAD1L, TAF10, TAF12, TRRAP and TAF9. Component of the TFTC-HAT complex. Component of the ADA2A-containing complex (ATAC), composed of KAT14, KAT2A, TADA2L, TADA3L, ZZ3, MBIP, WDR5, YEATS2, CCDC101 and DR1.

It localises to the nucleus. Functions as a component of the PCAF complex. The PCAF complex is capable of efficiently acetylating histones in a nucleosomal context. The PCAF complex could be considered as the human version of the yeast SAGA complex. Also known as a coactivator for p53/TP53-dependent transcriptional activation. Component of the ATAC complex, a complex with histone acetyltransferase activity on histones H3 and H4. This is Transcriptional adapter 3 (Tada3) from Rattus norvegicus (Rat).